Consider the following 168-residue polypeptide: Venom nerve growth factor (168 aa).

The N-terminal stretch at 1–18 (MSMLCYTLIIAFLIGIWA) is a signal peptide. Positions 19 to 123 (APKSEDNVSL…ADSLNRNIRA (105 aa)) are excised as a propeptide. A glycan (N-linked (GlcNAc...) asparagine) is linked at asparagine 25. The tract at residues 48 to 70 (LKTSQNTDQHSPAPKKAEDQEFG) is disordered. An N-linked (GlcNAc...) asparagine glycan is attached at asparagine 148.

Belongs to the NGF-beta family. Homodimer; non-covalently linked. In terms of tissue distribution, expressed by the venom gland.

Its subcellular location is the secreted. In terms of biological role, nerve growth factor is important for the development and maintenance of the sympathetic and sensory nervous systems. It stimulates division and differentiation of sympathetic and embryonic sensory neurons as well as basal forebrain cholinergic neurons in the brain. Its relevance in the snake venom is not clear. However, it has been shown to inhibit metalloproteinase-dependent proteolysis of platelet glycoprotein Ib alpha, suggesting a metalloproteinase inhibition to prevent metalloprotease autodigestion and/or protection against prey proteases. This chain is Venom nerve growth factor, found in Echis ocellatus (Ocellated saw-scaled viper).